A 316-amino-acid polypeptide reads, in one-letter code: Universal stress protein E (316 aa).

The protein belongs to the universal stress protein A family.

The protein localises to the cytoplasm. Its function is as follows. Required for resistance to DNA-damaging agents. In Escherichia coli O157:H7, this protein is Universal stress protein E (uspE).